We begin with the raw amino-acid sequence, 398 residues long: MFLKNIFIGLAIALLVDATPTTTKRSAGFVALDFSVVKTPKAFPVTNGQEGKTSKRQAVPVTLHNEQVTYAADITVGSNNQKLNVIVDTGSSDLWVPDVNVDCQVTYSDQTADFCKQKGTYDPSGSSASQDLNTPFKIGYGDGSSSQGTLYKDTVGFGGVSIKNQVLADVDSTSIDQGILGVGYKTNEAGGSYDNVPVTLKKQGVIAKNAYSLYLNSPDAATGQIIFGGVDNAKYSGSLIALPVTSDRELRISLGSVEVSGKTINTDNVDVLLDSGTTITYLQQDLADQIIKAFNGKLTQDSNGNSFYEVDCNLSGDVVFNFSKNAKISVPASEFAASLQGDDGQPYDKCQLLFDVNDANILGDNFLRSAYIVYDLDNNEISLAQVKYTSASSISALT.

A signal peptide spans 1-18 (MFLKNIFIGLAIALLVDA). Residues 19 to 56 (TPTTTKRSAGFVALDFSVVKTPKAFPVTNGQEGKTSKR) constitute a propeptide, activation peptide. The region spanning 70-384 (YAADITVGSN…DLDNNEISLA (315 aa)) is the Peptidase A1 domain. Asp88 is a catalytic residue. 88–90 (DTG) contacts pepstatin A. Cys103 and Cys115 are oxidised to a cystine. Pepstatin A contacts are provided by residues 141–142 (GD) and 274–278 (DSGTT). The active site involves Asp274. Cys312 and Cys350 form a disulfide bridge. 2 N-linked (GlcNAc...) asparagine glycosylation sites follow: Asn313 and Asn321.

Belongs to the peptidase A1 family. As to quaternary structure, monomer. In terms of processing, O-glycosylated.

It localises to the secreted. The enzyme catalyses Preferential cleavage at the carboxyl of hydrophobic amino acids, but fails to cleave 15-Leu-|-Tyr-16, 16-Tyr-|-Leu-17 and 24-Phe-|-Phe-25 of insulin B chain. Activates trypsinogen, and degrades keratin.. This Candida albicans (strain WO-1) (Yeast) protein is Candidapepsin-2 (SAP2).